A 282-amino-acid chain; its full sequence is Osteoclast-associated immunoglobulin-like receptor (282 aa).

A signal peptide spans 1–18; that stretch reads MALVLILQLLTLWPLCHT. Ig-like domains lie at 22–116 and 126–219; these read PSVP…SQPS and ELPR…SWEG. N48 is a glycosylation site (N-linked (GlcNAc...) asparagine). C53 and C100 form a disulfide bridge. A glycan (N-linked (GlcNAc...) asparagine) is linked at N145. The segment at 221 to 282 is disordered; sequence GPEARPASSA…PAPPPSDPGV (62 aa). Residues 273–282 are compositionally biased toward pro residues; the sequence is PAPPPSDPGV.

This sequence belongs to the leukocyte receptor complex/polymeric immunoglobulin receptor (PIR/LRC) family.

Its subcellular location is the secreted. The protein resides in the cell membrane. Its function is as follows. Regulator of osteoclastogenesis which plays an important bone-specific function in osteoclast differentiation. The polypeptide is Osteoclast-associated immunoglobulin-like receptor (OSCAR) (Homo sapiens (Human)).